The chain runs to 103 residues: N(4)-acetylcytidine amidohydrolase (103 aa).

The ASCH domain maps to I6–F100. The active-site Proton acceptor is K21. T24 serves as the catalytic Nucleophile. The Proton donor role is filled by E74.

It belongs to the N(4)-acetylcytidine amidohydrolase family.

It carries out the reaction N(4)-acetylcytidine + H2O = cytidine + acetate + H(+). The enzyme catalyses N(4)-acetyl-2'-deoxycytidine + H2O = 2'-deoxycytidine + acetate + H(+). It catalyses the reaction N(4)-acetylcytosine + H2O = cytosine + acetate + H(+). Catalyzes the hydrolysis of N(4)-acetylcytidine (ac4C). The chain is N(4)-acetylcytidine amidohydrolase (yqfB) from Salmonella arizonae (strain ATCC BAA-731 / CDC346-86 / RSK2980).